The sequence spans 176 residues: 2-oxo-4-hydroxy-4-carboxy-5-ureidoimidazoline decarboxylase (176 aa).

The active-site Proton donor; for OHCU decarboxylase activity is histidine 70. Substrate-binding positions include proline 71, 83-87 (SQEEQ), and 118-122 (FIMAV). The tract at residues 72 to 96 (DLGERTEMTDESQEEQASAGLDRLP) is disordered.

The protein belongs to the OHCU decarboxylase family.

The enzyme catalyses 5-hydroxy-2-oxo-4-ureido-2,5-dihydro-1H-imidazole-5-carboxylate + H(+) = (S)-allantoin + CO2. It participates in purine metabolism; urate degradation; (S)-allantoin from urate: step 3/3. Functionally, catalyzes the stereoselective decarboxylation of 2-oxo-4-hydroxy-4-carboxy-5-ureidoimidazoline (OHCU) to (S)-allantoin. The protein is 2-oxo-4-hydroxy-4-carboxy-5-ureidoimidazoline decarboxylase of Halalkalicoccus jeotgali (strain DSM 18796 / CECT 7217 / JCM 14584 / KCTC 4019 / B3).